A 423-amino-acid polypeptide reads, in one-letter code: Deoxyguanosinetriphosphate triphosphohydrolase-like protein (423 aa).

The HD domain maps to 66-216 (RLTHSLEVAQ…MDFSDDIAYS (151 aa)).

This sequence belongs to the dGTPase family. Type 2 subfamily.

The chain is Deoxyguanosinetriphosphate triphosphohydrolase-like protein from Corynebacterium diphtheriae (strain ATCC 700971 / NCTC 13129 / Biotype gravis).